Here is a 110-residue protein sequence, read N- to C-terminus: Minor capsid protein VP2 (110 aa).

Belongs to the vesivirus VP2 protein family. In terms of assembly, homooligomer. The portal-like structure consists in 12 copies of VP2. Interacts with capsid protein VP1.

It localises to the virion. Its subcellular location is the host cytoplasm. In terms of biological role, minor structural protein that forms a portal-like structure at a unique three-fold axis of symmetry, following binding to the host receptor. The channel formed by VP2 may allow the delivery of the viral genome through the host endosomal membrane. The sequence is that of Minor capsid protein VP2 from Otariidae (fur seals &amp; sea lions).